The sequence spans 500 residues: NADH-quinone oxidoreductase subunit N (500 aa).

The next 14 helical transmembrane spans lie at 6–26 (SWIA…IALV), 40–60 (ALTL…ALGG), 69–89 (MVVV…ALMI), 106–125 (GGEF…VMIS), 129–151 (FLVL…ALRR), 164–184 (FVLG…LYGA), 207–227 (LVFG…AVPF), 239–259 (PTAV…AMTI), 276–296 (MLAL…VAQT), 302–322 (LAFS…AGVV), 337–357 (MFYA…ILLL), 380–400 (YAGV…LVGF), 417–437 (SYLV…FYYL), and 464–484 (IVLA…SSLM).

The protein belongs to the complex I subunit 2 family. As to quaternary structure, NDH-1 is composed of 14 different subunits. Subunits NuoA, H, J, K, L, M, N constitute the membrane sector of the complex.

It localises to the cell inner membrane. It carries out the reaction a quinone + NADH + 5 H(+)(in) = a quinol + NAD(+) + 4 H(+)(out). Its function is as follows. NDH-1 shuttles electrons from NADH, via FMN and iron-sulfur (Fe-S) centers, to quinones in the respiratory chain. The immediate electron acceptor for the enzyme in this species is believed to be ubiquinone. Couples the redox reaction to proton translocation (for every two electrons transferred, four hydrogen ions are translocated across the cytoplasmic membrane), and thus conserves the redox energy in a proton gradient. The chain is NADH-quinone oxidoreductase subunit N from Polaromonas naphthalenivorans (strain CJ2).